A 223-amino-acid chain; its full sequence is Adenylate kinase 4, mitochondrial (223 aa).

15-20 (GSGKGT) is a binding site for a ribonucleoside 5'-triphosphate. An NMP region spans residues 35-64 (SSGHFLRENIKANTEVGDMAKQYIEKGLLV). The AMP site is built by S36 and R41. Position 60 is an N6-succinyllysine (K60). Residues 62 to 64 (LLV), 89 to 92 (GFPR), and Q96 contribute to the AMP site. Residues 125–162 (RRWIHPPSGRVYNLDFNPPHVHGMDDVTGEPLVQQEDD) form an LID region. A ribonucleoside 5'-triphosphate-binding positions include R126 and 135-136 (VY). R170 lines the AMP pocket. K175 carries the post-translational modification N6-acetyllysine. 2 positions are modified to N6-acetyllysine; alternate: K179 and K186. An N6-succinyllysine; alternate mark is found at K179 and K186. A ribonucleoside 5'-triphosphate is bound at residue T199.

The protein belongs to the adenylate kinase family. AK3 subfamily. In terms of assembly, monomer. Interacts with SLC25A5/ANT2.

Its subcellular location is the mitochondrion matrix. It catalyses the reaction a ribonucleoside 5'-phosphate + ATP = a ribonucleoside 5'-diphosphate + ADP. It carries out the reaction AMP + ATP = 2 ADP. The catalysed reaction is GTP + AMP = GDP + ADP. The enzyme catalyses CMP + ATP = CDP + ADP. It catalyses the reaction GTP + CMP = CDP + GDP. It carries out the reaction dAMP + ATP = dADP + ADP. The catalysed reaction is dCMP + ATP = dCDP + ADP. The enzyme catalyses a 2'-deoxyribonucleoside 5'-diphosphate + ATP = a 2'-deoxyribonucleoside 5'-triphosphate + ADP. It catalyses the reaction a ribonucleoside 5'-diphosphate + ATP = a ribonucleoside 5'-triphosphate + ADP. It carries out the reaction GDP + ATP = GTP + ADP. The catalysed reaction is CDP + GTP = CTP + GDP. The enzyme catalyses CDP + ATP = CTP + ADP. It catalyses the reaction UDP + ATP = UTP + ADP. It carries out the reaction GTP + UDP = UTP + GDP. The catalysed reaction is dADP + GTP = dATP + GDP. The enzyme catalyses dCDP + GTP = dCTP + GDP. It catalyses the reaction dCDP + ATP = dCTP + ADP. It carries out the reaction dGDP + ATP = dGTP + ADP. The catalysed reaction is dTDP + GTP = dTTP + GDP. The enzyme catalyses dTDP + ATP = dTTP + ADP. In terms of biological role, broad-specificity mitochondrial nucleoside phosphate kinase involved in cellular nucleotide homeostasis by catalyzing nucleoside-phosphate interconversions. Similar to other adenylate kinases, preferentially catalyzes the phosphorylation of the nucleoside monophosphate AMP with ATP as phosphate donor to produce ADP. Phosphorylates only AMP when using GTP as phosphate donor. In vitro, can also catalyze the phosphorylation of CMP, dAMP and dCMP and use GTP as an alternate phosphate donor. Moreover, exhibits a diphosphate kinase activity, producing ATP, CTP, GTP, UTP, TTP, dATP, dCTP and dGTP from the corresponding diphosphate substrates with either ATP or GTP as phosphate donors. Plays a role in controlling cellular ATP levels by regulating phosphorylation and activation of the energy sensor protein kinase AMPK. Plays a protective role in the cellular response to oxidative stress. The sequence is that of Adenylate kinase 4, mitochondrial from Bos taurus (Bovine).